A 144-amino-acid chain; its full sequence is Large ribosomal subunit protein uL15 (144 aa).

Positions 1–59 (MELNNLKPAEGAKHAKRRVGRGIGSGLGKTAGRGHKGQKSRSGGFHKVGFEGGQMPLQR) are disordered. Gly residues predominate over residues 21-31 (RGIGSGLGKTA).

This sequence belongs to the universal ribosomal protein uL15 family. In terms of assembly, part of the 50S ribosomal subunit.

Its function is as follows. Binds to the 23S rRNA. The polypeptide is Large ribosomal subunit protein uL15 (Burkholderia thailandensis (strain ATCC 700388 / DSM 13276 / CCUG 48851 / CIP 106301 / E264)).